The sequence spans 381 residues: MMKKSLCCALLLTASFSTFAAAKTEQQIADIVNRTITPLMQEQAIPGMAVAVIYQGKPYYFTWGKADIANNHPVTQQTLFELGSVSKTFNGVLGGDAIARGEIKLSDPVTKYWPELTGKQWQGIRLLHLATYTAGGLPLQIPDDVRDKAALLHFYQNWQPQWTPGAKRLYANSSIGLFGALAVKPSGMSYEEAMTRRVLQPLKLAHTWITVPQNEQKDYAWGYREGKPVHVSPGQLDAEAYGVKSSVIDMARWVQANMDASHVQEKTLQQGIALAQSRYWRIGDMYQGLGWEMLNWPLKADSIINGSDSKVALAALPAVEVNPPAPAVKASWVHKTGSTGGFGSYVAFVPEKNLGIVMLANKSYPNPVRVEAAWRILEKLQ.

Residues 1–20 (MMKKSLCCALLLTASFSTFA) form the signal peptide. Serine 84 serves as the catalytic Acyl-ester intermediate. Positions 84, 140, 170, and 172 each coordinate a beta-lactam.

It belongs to the class-C beta-lactamase family.

The catalysed reaction is a beta-lactam + H2O = a substituted beta-amino acid. With respect to regulation, inhibited by the beta-lactamase-blocking agents sulbactam, tazobactam, avibactam and 3-aminophenylboronic acid (APB). Class C beta-lactamase which confers resistance to penicillins and cephalosporins. Has nitrocefin-, cefoxitin- and cefoperazone-hydrolyzing activities. The sequence is that of Beta-lactamase CMY-2 from Klebsiella pneumoniae.